The following is a 962-amino-acid chain: Leucine--tRNA ligase (962 aa).

The short motif at 41 to 51 (PYLNGNLHAGH) is the 'HIGH' region element. Residues 631–635 (KMSKS) carry the 'KMSKS' region motif. Lysine 634 is a binding site for ATP.

The protein belongs to the class-I aminoacyl-tRNA synthetase family.

It is found in the cytoplasm. It catalyses the reaction tRNA(Leu) + L-leucine + ATP = L-leucyl-tRNA(Leu) + AMP + diphosphate. The protein is Leucine--tRNA ligase of Methanococcoides burtonii (strain DSM 6242 / NBRC 107633 / OCM 468 / ACE-M).